We begin with the raw amino-acid sequence, 202 residues long: Small ribosomal subunit protein uS2 (202 aa).

This sequence belongs to the universal ribosomal protein uS2 family.

The chain is Small ribosomal subunit protein uS2 (rps2) from Pyrococcus horikoshii (strain ATCC 700860 / DSM 12428 / JCM 9974 / NBRC 100139 / OT-3).